Here is a 144-residue protein sequence, read N- to C-terminus: Giant hemoglobin AIII chain (144 aa).

A Globin domain is found at 2–144 (ECGPLQRLKV…DVITGGIQGN (143 aa)). His-95 serves as a coordination point for heme b.

Belongs to the globin family. In terms of assembly, giant hemoglobin is composed of four heme-containing chains (AI to AIV), and two linker chains (AV and AVI).

The sequence is that of Giant hemoglobin AIII chain from Lamellibrachia sp. (Deep-sea giant tube worm).